Here is a 215-residue protein sequence, read N- to C-terminus: NADH-quinone oxidoreductase subunit C (215 aa).

The protein belongs to the complex I 30 kDa subunit family. In terms of assembly, NDH-1 is composed of 14 different subunits. Subunits NuoB, C, D, E, F, and G constitute the peripheral sector of the complex.

It localises to the cell inner membrane. It catalyses the reaction a quinone + NADH + 5 H(+)(in) = a quinol + NAD(+) + 4 H(+)(out). Its function is as follows. NDH-1 shuttles electrons from NADH, via FMN and iron-sulfur (Fe-S) centers, to quinones in the respiratory chain. The immediate electron acceptor for the enzyme in this species is believed to be ubiquinone. Couples the redox reaction to proton translocation (for every two electrons transferred, four hydrogen ions are translocated across the cytoplasmic membrane), and thus conserves the redox energy in a proton gradient. This chain is NADH-quinone oxidoreductase subunit C, found in Methylobacterium sp. (strain 4-46).